A 187-amino-acid chain; its full sequence is Protein TIFY 3B (187 aa).

Residues Met-1–Ala-10 are compositionally biased toward basic and acidic residues. The tract at residues Met-1–Glu-50 is disordered. Residues Gly-14 to Gly-32 are compositionally biased toward gly residues. The Tify domain occupies Pro-51–Lys-86. Positions Pro-139–Tyr-163 match the Jas motif. The short motif at Ala-141–Arg-148 is the Nuclear localization signal element. The segment at Lys-152–Ala-187 is disordered.

The protein belongs to the TIFY/JAZ family. As to quaternary structure, interacts with MYC2, AFPH2/NINJA, TIFY10A/JAZ1, TIFY10B/JAZ2, TIFY11A/JAZ5, TIFY11B/JAZ6, TIFY5A/JAZ8 and TIFY9/JAZ10. (Microbial infection) Interacts with the pathogenic Pseudomonas syringae HopZ1a protein. In terms of processing, (Microbial infection) Acetylated by Pseudomonas syringae HopZ1a. Post-translationally, ubiquitinated. Targeted for degradation by the SCF(COI1) E3 ubiquitin ligase-proteasome pathway during jasmonate signaling.

The protein localises to the nucleus. In terms of biological role, repressor of jasmonate responses. This is Protein TIFY 3B from Arabidopsis thaliana (Mouse-ear cress).